The following is a 2300-amino-acid chain: Adenylate cyclase (2300 aa).

Polar residues-rich tracts occupy residues Met1 to Thr21 and Thr28 to Leu41. 3 disordered regions span residues Met1–Leu256, Gly272–Arg593, and Thr631–Asp652. 2 stretches are compositionally biased toward low complexity: residues Ser42–Ser61 and Ser92–Pro152. Residues Thr153–Ser169 are compositionally biased toward polar residues. Residues Ile170–Met185 show a composition bias toward basic and acidic residues. Over residues Gln204–Gln221 the composition is skewed to low complexity. Positions Val228–Gln237 are enriched in polar residues. Low complexity predominate over residues Ser303 to Ser313. Residues Gly333–Ser344 show a composition bias toward basic and acidic residues. Over residues Glu345–Met357 the composition is skewed to polar residues. Over residues Pro410–Glu421 the composition is skewed to pro residues. Over residues Asp455 to Ser469 the composition is skewed to polar residues. Residues Lys484–Ser501 show a composition bias toward basic and acidic residues. Polar residues predominate over residues Asn511–Ala550. The segment covering Ser552 to Asn565 has biased composition (basic residues). Over residues Thr631–Lys643 the composition is skewed to low complexity. Residues Ser749 to Ser841 form the Ras-associating domain. 16 LRR repeats span residues Asn867–Lys890, Ala892–Ala914, Cys915–Ala938, Ser939–Lys961, Leu962–Lys986, Leu988–Leu1008, Glu1009–Leu1031, Asn1033–Leu1055, Val1056–Arg1079, Glu1081–Phe1097, Glu1098–Val1119, Pro1120–Leu1142, Met1143–Leu1165, Lys1166–Leu1188, Thr1189–Ala1211, and Lys1213–Ala1234. The interval Pro1228–Lys1336 is disordered. Polar residues predominate over residues Ala1253–Pro1263. Low complexity predominate over residues Thr1313–Val1327. LRR repeat units lie at residues Ser1349–Glu1369, Leu1373–Ser1396, Pro1398–Glu1420, His1422–Ala1445, Lys1447–Trp1469, and Asn1474–Pro1497. Residues Pro1552–Val1828 form the PPM-type phosphatase domain. The segment at Phe1847 to Val1867 is disordered. One can recognise a Guanylate cyclase domain in the interval Ser1892–Ser2029. Residues Asp1897 and Asp1940 each contribute to the Mg(2+) site. Positions Leu2272–Glu2300 are disordered. Residues Asp2290–Glu2300 are compositionally biased toward acidic residues.

Belongs to the adenylyl cyclase class-4/guanylyl cyclase family. The cofactor is Mg(2+).

It carries out the reaction ATP = 3',5'-cyclic AMP + diphosphate. In terms of biological role, plays essential roles in regulation of cellular metabolism by catalyzing the synthesis of a second messenger, cAMP. The sequence is that of Adenylate cyclase (cr-1) from Neurospora crassa (strain ATCC 24698 / 74-OR23-1A / CBS 708.71 / DSM 1257 / FGSC 987).